Consider the following 195-residue polypeptide: Sec-independent protein translocase protein TatB (195 aa).

A helical transmembrane segment spans residues Met-1–Gly-21. A disordered region spans residues Glu-130–Pro-195. 2 stretches are compositionally biased toward low complexity: residues Pro-145 to Pro-157 and Thr-175 to Pro-195.

This sequence belongs to the TatB family. In terms of assembly, the Tat system comprises two distinct complexes: a TatABC complex, containing multiple copies of TatA, TatB and TatC subunits, and a separate TatA complex, containing only TatA subunits. Substrates initially bind to the TatABC complex, which probably triggers association of the separate TatA complex to form the active translocon.

The protein resides in the cell inner membrane. Functionally, part of the twin-arginine translocation (Tat) system that transports large folded proteins containing a characteristic twin-arginine motif in their signal peptide across membranes. Together with TatC, TatB is part of a receptor directly interacting with Tat signal peptides. TatB may form an oligomeric binding site that transiently accommodates folded Tat precursor proteins before their translocation. The chain is Sec-independent protein translocase protein TatB from Xanthomonas campestris pv. campestris (strain 8004).